A 371-amino-acid chain; its full sequence is D-erythrose-4-phosphate dehydrogenase (371 aa).

An NAD(+)-binding site is contributed by 12–13 (RI). Substrate contacts are provided by residues 154 to 156 (SCT), arginine 200, 213 to 214 (TK), and arginine 236. Residue cysteine 155 is the Nucleophile of the active site. Position 318 (asparagine 318) interacts with NAD(+).

The protein belongs to the glyceraldehyde-3-phosphate dehydrogenase family. Epd subfamily. Homotetramer.

Its subcellular location is the cytoplasm. It catalyses the reaction D-erythrose 4-phosphate + NAD(+) + H2O = 4-phospho-D-erythronate + NADH + 2 H(+). It functions in the pathway cofactor biosynthesis; pyridoxine 5'-phosphate biosynthesis; pyridoxine 5'-phosphate from D-erythrose 4-phosphate: step 1/5. In terms of biological role, catalyzes the NAD-dependent conversion of D-erythrose 4-phosphate to 4-phosphoerythronate. This Psychromonas ingrahamii (strain DSM 17664 / CCUG 51855 / 37) protein is D-erythrose-4-phosphate dehydrogenase.